A 283-amino-acid chain; its full sequence is Thymidylate synthase (283 aa).

Residue Arg-22 coordinates dUMP. Cys-160 acts as the Nucleophile in catalysis. DUMP contacts are provided by residues 180-183 (RSCD), Asn-191, and 221-223 (HIY). Position 183 (Asp-183) interacts with (6R)-5,10-methylene-5,6,7,8-tetrahydrofolate. Ser-282 contacts (6R)-5,10-methylene-5,6,7,8-tetrahydrofolate.

The protein belongs to the thymidylate synthase family. Bacterial-type ThyA subfamily. In terms of assembly, homodimer.

It localises to the cytoplasm. The enzyme catalyses dUMP + (6R)-5,10-methylene-5,6,7,8-tetrahydrofolate = 7,8-dihydrofolate + dTMP. It participates in pyrimidine metabolism; dTTP biosynthesis. In terms of biological role, catalyzes the reductive methylation of 2'-deoxyuridine-5'-monophosphate (dUMP) to 2'-deoxythymidine-5'-monophosphate (dTMP) while utilizing 5,10-methylenetetrahydrofolate (mTHF) as the methyl donor and reductant in the reaction, yielding dihydrofolate (DHF) as a by-product. This enzymatic reaction provides an intracellular de novo source of dTMP, an essential precursor for DNA biosynthesis. This chain is Thymidylate synthase, found in Photobacterium profundum (strain SS9).